Consider the following 142-residue polypeptide: Holo-[acyl-carrier-protein] synthase (142 aa).

The Mg(2+) site is built by Asp-8 and Glu-57.

This sequence belongs to the P-Pant transferase superfamily. AcpS family. Mg(2+) is required as a cofactor.

Its subcellular location is the cytoplasm. The enzyme catalyses apo-[ACP] + CoA = holo-[ACP] + adenosine 3',5'-bisphosphate + H(+). In terms of biological role, transfers the 4'-phosphopantetheine moiety from coenzyme A to a Ser of acyl-carrier-protein. This chain is Holo-[acyl-carrier-protein] synthase, found in Ruegeria sp. (strain TM1040) (Silicibacter sp.).